A 119-amino-acid polypeptide reads, in one-letter code: Large ribosomal subunit protein uL18 (119 aa).

The protein belongs to the universal ribosomal protein uL18 family. As to quaternary structure, part of the 50S ribosomal subunit; part of the 5S rRNA/L5/L18/L25 subcomplex. Contacts the 5S and 23S rRNAs.

Functionally, this is one of the proteins that bind and probably mediate the attachment of the 5S RNA into the large ribosomal subunit, where it forms part of the central protuberance. This is Large ribosomal subunit protein uL18 from Cereibacter sphaeroides (strain ATCC 17025 / ATH 2.4.3) (Rhodobacter sphaeroides).